Consider the following 194-residue polypeptide: Fe/S biogenesis protein NfuA (194 aa).

2 residues coordinate [4Fe-4S] cluster: Cys-152 and Cys-155.

It belongs to the NfuA family. Homodimer. Requires [4Fe-4S] cluster as cofactor.

In terms of biological role, involved in iron-sulfur cluster biogenesis. Binds a 4Fe-4S cluster, can transfer this cluster to apoproteins, and thereby intervenes in the maturation of Fe/S proteins. Could also act as a scaffold/chaperone for damaged Fe/S proteins. The sequence is that of Fe/S biogenesis protein NfuA from Azotobacter vinelandii (strain DJ / ATCC BAA-1303).